The following is a 490-amino-acid chain: Probable glycine dehydrogenase (decarboxylating) subunit 2 (490 aa).

An N6-(pyridoxal phosphate)lysine modification is found at lysine 273.

This sequence belongs to the GcvP family. C-terminal subunit subfamily. In terms of assembly, the glycine cleavage system is composed of four proteins: P, T, L and H. In this organism, the P 'protein' is a heterodimer of two subunits. Requires pyridoxal 5'-phosphate as cofactor.

It carries out the reaction N(6)-[(R)-lipoyl]-L-lysyl-[glycine-cleavage complex H protein] + glycine + H(+) = N(6)-[(R)-S(8)-aminomethyldihydrolipoyl]-L-lysyl-[glycine-cleavage complex H protein] + CO2. Its function is as follows. The glycine cleavage system catalyzes the degradation of glycine. The P protein binds the alpha-amino group of glycine through its pyridoxal phosphate cofactor; CO(2) is released and the remaining methylamine moiety is then transferred to the lipoamide cofactor of the H protein. This chain is Probable glycine dehydrogenase (decarboxylating) subunit 2, found in Staphylococcus aureus (strain Newman).